The chain runs to 169 residues: Large ribosomal subunit protein bL17 (169 aa).

Positions 124-169 (EKAVKRQDRSRRVKGSKKAIDEKTSDDSASVEAAPAAPEAEEKKDA) are disordered. Positions 131–140 (DRSRRVKGSK) are enriched in basic residues. Residues 150-161 (DSASVEAAPAAP) are compositionally biased toward low complexity.

It belongs to the bacterial ribosomal protein bL17 family. As to quaternary structure, part of the 50S ribosomal subunit. Contacts protein L32.

The polypeptide is Large ribosomal subunit protein bL17 (Chloroherpeton thalassium (strain ATCC 35110 / GB-78)).